Reading from the N-terminus, the 494-residue chain is Maintenance of mitochondrial morphology protein 1 (494 aa).

At 1 to 25 (MGDDQSLRSTVAENDISANLSFTQG) the chain is on the lumenal side. The chain crosses the membrane as a helical span at residues 26–46 (FLLGQLSVVLLIGAFIKFFIF). At 47 to 494 (GEAPPPPSRG…GTLPGGAAAN (448 aa)) the chain is on the cytoplasmic side. Disordered stretches follow at residues 53–99 (PSRG…VPSS), 278–330 (PPLH…KSNV), and 395–494 (RTGV…AAAN). Over residues 57–67 (LSHRASTHRRS) the composition is skewed to basic residues. Polar residues-rich tracts occupy residues 68-81 (NSIY…GTSR) and 88-99 (STSNVLRPVPSS). Residues 134 to 387 (QPESLDWFNV…EPRVQVVGLP (254 aa)) enclose the SMP-LTD domain. Residues 278–290 (PPLHTPSPSPSPP) are compositionally biased toward pro residues. Composition is skewed to polar residues over residues 300-318 (THPT…NAQE) and 406-415 (TGSNAASRSA). A compositionally biased stretch (basic and acidic residues) spans 425–437 (RADDIGREPDGLR).

It belongs to the MMM1 family. Homodimer. Component of the ER-mitochondria encounter structure (ERMES) or MDM complex, composed of mmm1, mdm10, mdm12 and mdm34. A mmm1 homodimer associates with one molecule of mdm12 on each side in a pairwise head-to-tail manner, and the SMP-LTD domains of mmm1 and mdm12 generate a continuous hydrophobic tunnel for phospholipid trafficking.

It localises to the endoplasmic reticulum membrane. Component of the ERMES/MDM complex, which serves as a molecular tether to connect the endoplasmic reticulum (ER) and mitochondria. Components of this complex are involved in the control of mitochondrial shape and protein biogenesis, and function in nonvesicular lipid trafficking between the ER and mitochondria. The mdm12-mmm1 subcomplex functions in the major beta-barrel assembly pathway that is responsible for biogenesis of all outer membrane beta-barrel proteins, and acts in a late step after the SAM complex. The mdm10-mdm12-mmm1 subcomplex further acts in the TOM40-specific pathway after the action of the mdm12-mmm1 complex. Essential for establishing and maintaining the structure of mitochondria and maintenance of mtDNA nucleoids. In Aspergillus oryzae (strain ATCC 42149 / RIB 40) (Yellow koji mold), this protein is Maintenance of mitochondrial morphology protein 1.